Reading from the N-terminus, the 385-residue chain is Leucine aminopeptidase 1 (385 aa).

An N-terminal signal peptide occupies residues 1–20; the sequence is MKFPSLLSLGVAASTTIVAA. Positions 21–87 are excised as a propeptide; that stretch reads VPDQKPIGDI…FPKTFAQTTV (67 aa). The N-linked (GlcNAc...) asparagine glycan is linked to N177. Zn(2+) is bound by residues H185, D204, E243, and D270. The cysteines at positions 319 and 323 are disulfide-linked. H352 contacts Zn(2+).

The protein belongs to the peptidase M28 family. M28E subfamily. In terms of assembly, monomer. It depends on Zn(2+) as a cofactor.

It localises to the secreted. Its function is as follows. Extracellular aminopeptidase that allows assimilation of proteinaceous substrates. This is Leucine aminopeptidase 1 (LAP1) from Ajellomyces capsulatus (strain G186AR / H82 / ATCC MYA-2454 / RMSCC 2432) (Darling's disease fungus).